The primary structure comprises 416 residues: 5-hydroxytryptamine receptor 1A-beta (416 aa).

Residues 1 to 35 are Extracellular-facing; sequence MEGTNNTTGWTHFDSTSNRTSKSFDEEVKLSYQVV. 3 N-linked (GlcNAc...) asparagine glycosylation sites follow: Asn5, Asn6, and Asn18. Residues 36-56 traverse the membrane as a helical segment; sequence TSFLLGALILCSIFGNACVVA. Residues 57–70 lie on the Cytoplasmic side of the membrane; that stretch reads AIALERSLQNVANY. Residues 71–95 form a helical membrane-spanning segment; the sequence is LIGSLAVTDLMVSVLVLPMAALYQV. Residues 96 to 104 are Extracellular-facing; it reads LNRWTLGQI. A helical membrane pass occupies residues 105–129; that stretch reads PCDIFISLDMLCCTSSILHLCVIAL. Cys106 and Cys189 are disulfide-bonded. 2 residues coordinate serotonin: Asp113 and Cys117. The short motif at 130 to 132 is the DRY motif; important for ligand-induced conformation changes element; the sequence is DRY. The Cytoplasmic segment spans residues 130–149; the sequence is DRYWAITEPIDYMKKRTPRR. A helical transmembrane segment spans residues 150–171; sequence AAVLISVTWLVGFSISIPPMLI. At 172–195 the chain is on the extracellular side; sequence MRSQPSSMAEDRANSKQCKITQDP. The chain crosses the membrane as a helical span at residues 196–218; the sequence is WYTIYSTFGAFYIPLTLMLVLYG. The Cytoplasmic segment spans residues 219–340; sequence RIFKAARFRI…LARERKTVKT (122 aa). 1D-myo-inositol 4-phosphate-binding residues include Lys339, Thr340, and Gly346. A helical transmembrane segment spans residues 341 to 364; the sequence is LGIIMGTFILCWLPFFIVALVMPF. At 365–372 the chain is on the extracellular side; it reads CQESCFMP. A helical transmembrane segment spans residues 373 to 397; that stretch reads HWLKDVINWLGYSNSLLNPIIYAYF. Positions 390 to 394 match the NPxxY motif; important for ligand-induced conformation changes and signaling motif; sequence NPIIY. 3 residues coordinate 1D-myo-inositol 4-phosphate: Phe397, Asn398, and Lys399. At 398–416 the chain is on the cytoplasmic side; the sequence is NKDFQSAFKKIIKCHFCRA.

Belongs to the G-protein coupled receptor 1 family. 5-hydroxytryptamine receptor subfamily.

Its subcellular location is the cell membrane. With respect to regulation, G-protein coupled receptor activity is regulated by lipids: phosphatidylinositol 4-phosphate increases HTR1A-mediated activity. G-protein coupled receptor for 5-hydroxytryptamine (serotonin). Also functions as a receptor for various drugs and psychoactive substances. Ligand binding causes a conformation change that triggers signaling via guanine nucleotide-binding proteins (G proteins) and modulates the activity of downstream effectors, such as adenylate cyclase. HTR1A is coupled to G(i)/G(o) G alpha proteins and mediates inhibitory neurotransmission: signaling inhibits adenylate cyclase activity and activates a phosphatidylinositol-calcium second messenger system that regulates the release of Ca(2+) ions from intracellular stores. Beta-arrestin family members regulate signaling by mediating both receptor desensitization and resensitization processes. The polypeptide is 5-hydroxytryptamine receptor 1A-beta (htr1a-B) (Takifugu rubripes (Japanese pufferfish)).